A 98-amino-acid polypeptide reads, in one-letter code: Large ribosomal subunit protein uL23 (98 aa).

This sequence belongs to the universal ribosomal protein uL23 family. In terms of assembly, part of the 50S ribosomal subunit. Contacts protein L29, and trigger factor when it is bound to the ribosome.

Functionally, one of the early assembly proteins it binds 23S rRNA. One of the proteins that surrounds the polypeptide exit tunnel on the outside of the ribosome. Forms the main docking site for trigger factor binding to the ribosome. In Clostridium kluyveri (strain NBRC 12016), this protein is Large ribosomal subunit protein uL23.